The primary structure comprises 740 residues: Autotransporter adhesin BtaE (740 aa).

The first 11 residues, 1-11 (MFGLSVNHAYA), serve as a signal peptide directing secretion. The tract at residues 12-647 (GPGIFINDGT…LQTLDQANAY (636 aa)) is surface exposed passenger domain. An outer membrane translocation of the passenger domain region spans residues 648-686 (TDKKFGKLNEDIVATRIEARQAAAIGLAAASLRYDDRPG). A run of 4 beta stranded transmembrane segments spans residues 686-696 (GKISAAIGGGF), 700-710 (EGAVALGLGHT), 719-725 (NLSAATS), and 728-739 (NWGMGAGFSYTF). A translocator domain region spans residues 687–740 (KISAAIGGGFWRGEGAVALGLGHTSEDQRMRSNLSAATSGGNWGMGAGFSYTFN).

This sequence belongs to the autotransporter-2 (AT-2) (TC 1.B.40) family. As to quaternary structure, homotrimer.

Its subcellular location is the cell surface. It localises to the cell outer membrane. Binds to hyaluronic acid and epithelial cells, and is required for full virulence in the mouse model. This Brucella suis biovar 1 (strain 1330) protein is Autotransporter adhesin BtaE.